The sequence spans 238 residues: Probable transcriptional regulatory protein CT_457 (238 aa).

A disordered region spans residues 1 to 21 (MAGHSKWANTKHRKERADHKK). The segment covering 9–21 (NTKHRKERADHKK) has biased composition (basic residues).

Belongs to the TACO1 family.

It localises to the cytoplasm. This chain is Probable transcriptional regulatory protein CT_457, found in Chlamydia trachomatis serovar D (strain ATCC VR-885 / DSM 19411 / UW-3/Cx).